The following is a 95-amino-acid chain: Aspartyl/glutamyl-tRNA(Asn/Gln) amidotransferase subunit C (95 aa).

This sequence belongs to the GatC family. Heterotrimer of A, B and C subunits.

The catalysed reaction is L-glutamyl-tRNA(Gln) + L-glutamine + ATP + H2O = L-glutaminyl-tRNA(Gln) + L-glutamate + ADP + phosphate + H(+). The enzyme catalyses L-aspartyl-tRNA(Asn) + L-glutamine + ATP + H2O = L-asparaginyl-tRNA(Asn) + L-glutamate + ADP + phosphate + 2 H(+). Allows the formation of correctly charged Asn-tRNA(Asn) or Gln-tRNA(Gln) through the transamidation of misacylated Asp-tRNA(Asn) or Glu-tRNA(Gln) in organisms which lack either or both of asparaginyl-tRNA or glutaminyl-tRNA synthetases. The reaction takes place in the presence of glutamine and ATP through an activated phospho-Asp-tRNA(Asn) or phospho-Glu-tRNA(Gln). This is Aspartyl/glutamyl-tRNA(Asn/Gln) amidotransferase subunit C from Rhizobium etli (strain ATCC 51251 / DSM 11541 / JCM 21823 / NBRC 15573 / CFN 42).